The chain runs to 644 residues: Exoribonuclease 2 (644 aa).

The RNB domain maps to 189 to 516; the sequence is REDLTALDFV…NHRLLKAVIK (328 aa). The S1 motif domain occupies 561 to 643; the sequence is DTRFAAEIVD…ETRSIIARPV (83 aa).

This sequence belongs to the RNR ribonuclease family. RNase II subfamily.

The protein localises to the cytoplasm. It catalyses the reaction Exonucleolytic cleavage in the 3'- to 5'-direction to yield nucleoside 5'-phosphates.. Its function is as follows. Involved in mRNA degradation. Hydrolyzes single-stranded polyribonucleotides processively in the 3' to 5' direction. This is Exoribonuclease 2 from Escherichia coli O17:K52:H18 (strain UMN026 / ExPEC).